Reading from the N-terminus, the 404-residue chain is Nicotinate phosphoribosyltransferase (404 aa).

His224 is subject to Phosphohistidine; by autocatalysis.

Belongs to the NAPRTase family. Post-translationally, transiently phosphorylated on a His residue during the reaction cycle. Phosphorylation strongly increases the affinity for substrates and increases the rate of nicotinate D-ribonucleotide production. Dephosphorylation regenerates the low-affinity form of the enzyme, leading to product release.

It catalyses the reaction nicotinate + 5-phospho-alpha-D-ribose 1-diphosphate + ATP + H2O = nicotinate beta-D-ribonucleotide + ADP + phosphate + diphosphate. Its pathway is cofactor biosynthesis; NAD(+) biosynthesis; nicotinate D-ribonucleotide from nicotinate: step 1/1. In terms of biological role, catalyzes the synthesis of beta-nicotinate D-ribonucleotide from nicotinate and 5-phospho-D-ribose 1-phosphate at the expense of ATP. The protein is Nicotinate phosphoribosyltransferase of Proteus mirabilis (strain HI4320).